The sequence spans 320 residues: Glycerol-3-phosphate dehydrogenase [NAD(P)+] (320 aa).

S14, F15, R35, and K109 together coordinate NADPH. The sn-glycerol 3-phosphate site is built by K109 and G137. A141 serves as a coordination point for NADPH. Positions 192, 248, 258, 259, and 260 each coordinate sn-glycerol 3-phosphate. The active-site Proton acceptor is the K192. R259 provides a ligand contact to NADPH. NADPH-binding residues include L283 and E285.

The protein belongs to the NAD-dependent glycerol-3-phosphate dehydrogenase family.

Its subcellular location is the cytoplasm. The catalysed reaction is sn-glycerol 3-phosphate + NAD(+) = dihydroxyacetone phosphate + NADH + H(+). It carries out the reaction sn-glycerol 3-phosphate + NADP(+) = dihydroxyacetone phosphate + NADPH + H(+). The protein operates within membrane lipid metabolism; glycerophospholipid metabolism. Catalyzes the reduction of the glycolytic intermediate dihydroxyacetone phosphate (DHAP) to sn-glycerol 3-phosphate (G3P), the key precursor for phospholipid synthesis. This is Glycerol-3-phosphate dehydrogenase [NAD(P)+] from Rickettsia typhi (strain ATCC VR-144 / Wilmington).